Reading from the N-terminus, the 458-residue chain is Argininosuccinate lyase (458 aa).

This sequence belongs to the lyase 1 family. Argininosuccinate lyase subfamily.

Its subcellular location is the cytoplasm. It catalyses the reaction 2-(N(omega)-L-arginino)succinate = fumarate + L-arginine. It participates in amino-acid biosynthesis; L-arginine biosynthesis; L-arginine from L-ornithine and carbamoyl phosphate: step 3/3. The chain is Argininosuccinate lyase from Salmonella newport (strain SL254).